The sequence spans 157 residues: Transcriptional regulator AzlB (157 aa).

An HTH asnC-type domain is found at 5–66 (LDETDKAILR…IVDEKKLGIE (62 aa)). The H-T-H motif DNA-binding region spans 24–43 (NLNLSKKIGLSPSACLARTK).

Its function is as follows. Transcriptional repressor of the azlBCD operon involved in branched-chain amino acid transport. The sequence is that of Transcriptional regulator AzlB (azlB) from Bacillus subtilis (strain 168).